A 513-amino-acid polypeptide reads, in one-letter code: Probable DNA ligase (513 aa).

Glutamate 213 provides a ligand contact to ATP. The active-site N6-AMP-lysine intermediate is the lysine 215. The ATP site is built by arginine 220, arginine 235, glutamate 264, phenylalanine 304, arginine 376, and lysine 382.

Belongs to the ATP-dependent DNA ligase family. Mg(2+) is required as a cofactor.

The enzyme catalyses ATP + (deoxyribonucleotide)n-3'-hydroxyl + 5'-phospho-(deoxyribonucleotide)m = (deoxyribonucleotide)n+m + AMP + diphosphate.. Functionally, DNA ligase that seals nicks in double-stranded DNA during DNA replication, DNA recombination and DNA repair. The chain is Probable DNA ligase from Anaeromyxobacter dehalogenans (strain 2CP-1 / ATCC BAA-258).